Consider the following 166-residue polypeptide: Small ribosomal subunit protein uS5 (166 aa).

The S5 DRBM domain occupies 11–74; it reads LQEKLVAVNR…EQARRNMVKV (64 aa).

Belongs to the universal ribosomal protein uS5 family. Part of the 30S ribosomal subunit. Contacts proteins S4 and S8.

Functionally, with S4 and S12 plays an important role in translational accuracy. In terms of biological role, located at the back of the 30S subunit body where it stabilizes the conformation of the head with respect to the body. In Tolumonas auensis (strain DSM 9187 / NBRC 110442 / TA 4), this protein is Small ribosomal subunit protein uS5.